Reading from the N-terminus, the 294-residue chain is Coiled-coil domain-containing protein 69 (294 aa).

A disordered region spans residues 1–43 (MGCGHSRLSCCKPPKKRRQRPDQPPKPEPQELGPLNGDTATTD). A lipid anchor (N-myristoyl glycine) is attached at glycine 2. The segment covering 20–29 (RPDQPPKPEP) has biased composition (basic and acidic residues). A coiled-coil region spans residues 47–270 (ASEEAEQHQK…QEKEELLYRV (224 aa)). A phosphoserine mark is found at serine 152 and serine 239.

It belongs to the CCDC69 family.

The protein localises to the cytoplasm. It localises to the cytoskeleton. It is found in the spindle. The protein resides in the midbody. May act as a scaffold to regulate the recruitment and assembly of spindle midzone components. Required for the localization of AURKB and PLK1 to the spindle midzone. In Bos taurus (Bovine), this protein is Coiled-coil domain-containing protein 69 (CCDC69).